The following is an 86-amino-acid chain: Probable oxaloacetate decarboxylase gamma chain 1 (86 aa).

The helical transmembrane segment at 11–33 (AATLMVTGMAVVFLFLTLLVYLV) threads the bilayer.

This sequence belongs to the OadG family. In terms of assembly, heterotrimer of an alpha, a beta and a gamma subunit. It depends on Na(+) as a cofactor.

Its subcellular location is the cell membrane. The enzyme catalyses oxaloacetate + 2 Na(+)(in) + H(+) = pyruvate + 2 Na(+)(out) + CO2. Its function is as follows. Catalyzes the decarboxylation of oxaloacetate coupled to Na(+) translocation. The chain is Probable oxaloacetate decarboxylase gamma chain 1 (oadG1) from Vibrio cholerae serotype O1 (strain ATCC 39315 / El Tor Inaba N16961).